The primary structure comprises 786 residues: Protein SEY1 (786 aa).

Topologically, residues 1-684 (MSDLKEAIQL…KRSIVNTTER (684 aa)) are cytoplasmic. In terms of domain architecture, GB1/RHD3-type G spans 35–262 (GVKYHVISVF…QDASFFKDEY (228 aa)). 45-52 (GSQSSGKS) is a binding site for GTP. A coiled-coil region spans residues 355 to 375 (KKVYEERRDDLIKQLNTIIDE). Residues 685–705 (IPLYMYALVVALGWGRIITIL) form a helical membrane-spanning segment. Residues 706–708 (RNP) lie on the Lumenal side of the membrane. A helical transmembrane segment spans residues 709–729 (ATIILSIIVLAGAYFVHKLNL). The Cytoplasmic segment spans residues 730 to 786 (WGPLLQFANQATGQATAVLKQTVRSLVVDEEPKRKILVEPHESEGVDKEPSKNDQHL). Positions 765–786 (ILVEPHESEGVDKEPSKNDQHL) are disordered.

Belongs to the TRAFAC class dynamin-like GTPase superfamily. GB1/RHD3 GTPase family. RHD3 subfamily.

It localises to the endoplasmic reticulum membrane. Functionally, cooperates with the reticulon proteins and tubule-shaping DP1 family proteins to generate and maintain the structure of the tubular endoplasmic reticulum network. Has GTPase activity, which is required for its function in ER organization. In Kluyveromyces lactis (strain ATCC 8585 / CBS 2359 / DSM 70799 / NBRC 1267 / NRRL Y-1140 / WM37) (Yeast), this protein is Protein SEY1.